We begin with the raw amino-acid sequence, 392 residues long: Chorismate synthase (392 aa).

NADP(+) contacts are provided by Arg40 and Arg46. Residues 135 to 137 (RAS), 256 to 257 (QA), Gly300, 315 to 319 (KPIST), and Arg341 contribute to the FMN site.

It belongs to the chorismate synthase family. As to quaternary structure, homotetramer. FMNH2 serves as cofactor.

It carries out the reaction 5-O-(1-carboxyvinyl)-3-phosphoshikimate = chorismate + phosphate. The protein operates within metabolic intermediate biosynthesis; chorismate biosynthesis; chorismate from D-erythrose 4-phosphate and phosphoenolpyruvate: step 7/7. Functionally, catalyzes the anti-1,4-elimination of the C-3 phosphate and the C-6 proR hydrogen from 5-enolpyruvylshikimate-3-phosphate (EPSP) to yield chorismate, which is the branch point compound that serves as the starting substrate for the three terminal pathways of aromatic amino acid biosynthesis. This reaction introduces a second double bond into the aromatic ring system. The polypeptide is Chorismate synthase (Acidothermus cellulolyticus (strain ATCC 43068 / DSM 8971 / 11B)).